A 274-amino-acid polypeptide reads, in one-letter code: Undecaprenyl-diphosphatase (274 aa).

Helical transmembrane passes span 1-21 (MDWF…FLPI), 48-68 (VVIQ…DFAG), 84-104 (LGVI…GDVI), 108-128 (LFRP…MWVI), 143-163 (IGLG…LWPG), 187-207 (FSFY…FIKS), 214-234 (IGLL…YLAI), and 254-274 (VIFG…NGGL).

Belongs to the UppP family.

It localises to the cell membrane. It catalyses the reaction di-trans,octa-cis-undecaprenyl diphosphate + H2O = di-trans,octa-cis-undecaprenyl phosphate + phosphate + H(+). Functionally, catalyzes the dephosphorylation of undecaprenyl diphosphate (UPP). Confers resistance to bacitracin. This is Undecaprenyl-diphosphatase from Deinococcus geothermalis (strain DSM 11300 / CIP 105573 / AG-3a).